Consider the following 88-residue polypeptide: Small ribosomal subunit protein bS20 (88 aa).

A disordered region spans residues 1–21 (MANTTSAKKATRKIARRTAVN).

Belongs to the bacterial ribosomal protein bS20 family.

Binds directly to 16S ribosomal RNA. The polypeptide is Small ribosomal subunit protein bS20 (Agrobacterium fabrum (strain C58 / ATCC 33970) (Agrobacterium tumefaciens (strain C58))).